The primary structure comprises 156 residues: Low molecular weight phosphotyrosine protein phosphatase (156 aa).

Cys-11 serves as the catalytic Nucleophile. Arg-17 is an active-site residue. Asp-128 serves as the catalytic Proton donor.

The protein belongs to the low molecular weight phosphotyrosine protein phosphatase family.

Its subcellular location is the cytoplasm. The enzyme catalyses O-phospho-L-tyrosyl-[protein] + H2O = L-tyrosyl-[protein] + phosphate. The catalysed reaction is a phosphate monoester + H2O = an alcohol + phosphate. Its function is as follows. May contribute to dephosphorylation of 'Tyr-15' of cdc2. This is Low molecular weight phosphotyrosine protein phosphatase (stp1) from Schizosaccharomyces pombe (strain 972 / ATCC 24843) (Fission yeast).